Here is a 157-residue protein sequence, read N- to C-terminus: MKVLEGSVAAPNAKVAVAIARFNSFINESLLEGAIDALKRIGQVKDENITIVRTPGAYELPLVARRLAESKKFDAIVALGTVIRGGTAHFEYVAGEASSGLGKVAMDAEIPVAFGVLTTENIEQAIERAGTKAGNKGAEAALTALEMVNLIQQIDAA.

5-amino-6-(D-ribitylamino)uracil is bound by residues phenylalanine 22, 57–59 (AYE), and 81–83 (TVI). 86–87 (GT) provides a ligand contact to (2S)-2-hydroxy-3-oxobutyl phosphate. Histidine 89 acts as the Proton donor in catalysis. Residue phenylalanine 114 coordinates 5-amino-6-(D-ribitylamino)uracil. Arginine 128 contacts (2S)-2-hydroxy-3-oxobutyl phosphate.

The protein belongs to the DMRL synthase family. Forms an icosahedral capsid composed of 60 subunits, arranged as a dodecamer of pentamers.

It catalyses the reaction (2S)-2-hydroxy-3-oxobutyl phosphate + 5-amino-6-(D-ribitylamino)uracil = 6,7-dimethyl-8-(1-D-ribityl)lumazine + phosphate + 2 H2O + H(+). Its pathway is cofactor biosynthesis; riboflavin biosynthesis; riboflavin from 2-hydroxy-3-oxobutyl phosphate and 5-amino-6-(D-ribitylamino)uracil: step 1/2. In terms of biological role, catalyzes the formation of 6,7-dimethyl-8-ribityllumazine by condensation of 5-amino-6-(D-ribitylamino)uracil with 3,4-dihydroxy-2-butanone 4-phosphate. This is the penultimate step in the biosynthesis of riboflavin. The chain is 6,7-dimethyl-8-ribityllumazine synthase from Haemophilus influenzae (strain 86-028NP).